A 240-amino-acid chain; its full sequence is NADH-quinone oxidoreductase subunit I 2 (240 aa).

4Fe-4S ferredoxin-type domains follow at residues 57 to 86 and 97 to 126; these read TDLR…IEWH and DRFA…MGYD. Residues cysteine 66, cysteine 69, cysteine 72, cysteine 76, cysteine 106, cysteine 109, cysteine 112, and cysteine 116 each contribute to the [4Fe-4S] cluster site. Positions 185–240 are disordered; it reads IHGYLGRPPLPKGYEPELKPQFRKPAEEAAEAQQAEAAGQPAAEPGKTNGEEAGQP. Over residues 198-211 the composition is skewed to basic and acidic residues; that stretch reads YEPELKPQFRKPAE. Low complexity predominate over residues 215–230; that stretch reads EAQQAEAAGQPAAEPG.

This sequence belongs to the complex I 23 kDa subunit family. In terms of assembly, NDH-1 is composed of 14 different subunits. Subunits NuoA, H, J, K, L, M, N constitute the membrane sector of the complex. The cofactor is [4Fe-4S] cluster.

The protein localises to the cell membrane. The enzyme catalyses a quinone + NADH + 5 H(+)(in) = a quinol + NAD(+) + 4 H(+)(out). Its function is as follows. NDH-1 shuttles electrons from NADH, via FMN and iron-sulfur (Fe-S) centers, to quinones in the respiratory chain. The immediate electron acceptor for the enzyme in this species is believed to be ubiquinone. Couples the redox reaction to proton translocation (for every two electrons transferred, four hydrogen ions are translocated across the cytoplasmic membrane), and thus conserves the redox energy in a proton gradient. The polypeptide is NADH-quinone oxidoreductase subunit I 2 (Symbiobacterium thermophilum (strain DSM 24528 / JCM 14929 / IAM 14863 / T)).